Consider the following 310-residue polypeptide: Thioredoxin reductase (310 aa).

Residue 34–41 coordinates FAD; it reads NGMQPGGQ. A disulfide bond links Cys-135 and Cys-138. 281–290 is an FAD binding site; the sequence is DVQDKIYRQA.

Belongs to the class-II pyridine nucleotide-disulfide oxidoreductase family. Homodimer. The cofactor is FAD.

It is found in the cytoplasm. It carries out the reaction [thioredoxin]-dithiol + NADP(+) = [thioredoxin]-disulfide + NADPH + H(+). The protein is Thioredoxin reductase (trxB) of Rickettsia conorii (strain ATCC VR-613 / Malish 7).